The chain runs to 63 residues: Sec-independent protein translocase protein TatA (63 aa).

A helical membrane pass occupies residues 1-21 (MGGLSVGSVVLIALVALLIFG).

The protein belongs to the TatA/E family. In terms of assembly, forms a complex with TatC.

It is found in the cell membrane. Its function is as follows. Part of the twin-arginine translocation (Tat) system that transports large folded proteins containing a characteristic twin-arginine motif in their signal peptide across membranes. TatA could form the protein-conducting channel of the Tat system. This Shouchella clausii (strain KSM-K16) (Alkalihalobacillus clausii) protein is Sec-independent protein translocase protein TatA.